We begin with the raw amino-acid sequence, 226 residues long: Ribonuclease 3 (226 aa).

Residues 7-129 (LPRLCRTLGY…IIGAIYLDSD (123 aa)) enclose the RNase III domain. Glu-42 is a Mg(2+) binding site. Asp-46 is an active-site residue. The Mg(2+) site is built by Asp-115 and Glu-118. Glu-118 is a catalytic residue. A DRBM domain is found at 156-226 (DAKTLLQEYL…AAQVLELLKK (71 aa)).

It belongs to the ribonuclease III family. In terms of assembly, homodimer. It depends on Mg(2+) as a cofactor.

The protein resides in the cytoplasm. The catalysed reaction is Endonucleolytic cleavage to 5'-phosphomonoester.. In terms of biological role, digests double-stranded RNA. Involved in the processing of primary rRNA transcript to yield the immediate precursors to the large and small rRNAs (23S and 16S). Processes some mRNAs, and tRNAs when they are encoded in the rRNA operon. Processes pre-crRNA and tracrRNA of type II CRISPR loci if present in the organism. The sequence is that of Ribonuclease 3 from Shewanella sp. (strain MR-7).